The chain runs to 103 residues: MSEFNNVSVVKEANIYFDGKVTSRTVIFPDGSRKTLGVMLPGEYTFNTGSAELMEILSGEMTVVLPGSPDPVAIKGGEAFEVPENASFKVNVTAVSDYICSFL.

Belongs to the nucleoside phosphorylase PpnP family.

The catalysed reaction is a purine D-ribonucleoside + phosphate = a purine nucleobase + alpha-D-ribose 1-phosphate. It carries out the reaction adenosine + phosphate = alpha-D-ribose 1-phosphate + adenine. It catalyses the reaction cytidine + phosphate = cytosine + alpha-D-ribose 1-phosphate. The enzyme catalyses guanosine + phosphate = alpha-D-ribose 1-phosphate + guanine. The catalysed reaction is inosine + phosphate = alpha-D-ribose 1-phosphate + hypoxanthine. It carries out the reaction thymidine + phosphate = 2-deoxy-alpha-D-ribose 1-phosphate + thymine. It catalyses the reaction uridine + phosphate = alpha-D-ribose 1-phosphate + uracil. The enzyme catalyses xanthosine + phosphate = alpha-D-ribose 1-phosphate + xanthine. In terms of biological role, catalyzes the phosphorolysis of diverse nucleosides, yielding D-ribose 1-phosphate and the respective free bases. Can use uridine, adenosine, guanosine, cytidine, thymidine, inosine and xanthosine as substrates. Also catalyzes the reverse reactions. The chain is Pyrimidine/purine nucleoside phosphorylase from Geobacter sp. (strain M21).